The sequence spans 88 residues: Platelet factor 4 (88 aa).

O-linked (GalNAc...) threonine glycosylation occurs at threonine 7. 2 cysteine pairs are disulfide-bonded: cysteine 25/cysteine 51 and cysteine 27/cysteine 67. Serine 41 carries the phosphoserine modification. 76 to 82 lines the heparin pocket; that stretch reads KKILKKL.

Belongs to the intercrine alpha (chemokine CxC) family. In terms of assembly, homotetramer. Interacts with TNFAIP6 (via Link domain). Interacts with CCR1. Interacts with CXCR3. Interacts with THBD; this interaction enhances generation of activated protein C. O-linked glycan consists of Gal-GalNAc disaccharide which is modified with sialic acid residues (microheterogeneity).

It localises to the secreted. Functionally, chemokine released during platelet aggregation that plays a role in different biological processes including hematopoiesis, cell proliferation, differentiation, and activation. Acts via different functional receptors including CCR1, CXCR3A or CXCR3B. Upon interaction with CXCR3A receptor, induces activated T-lymphocytes migration mediated via downstream Ras/extracellular signal-regulated kinase (ERK) signaling. Neutralizes the anticoagulant effect of heparin by binding more strongly to heparin than to the chondroitin-4-sulfate chains of the carrier molecule. Plays a role in the inhibition of hematopoiesis and in the maintenance of hematopoietic stem cell (HSC) quiescence. Chemotactic for neutrophils and monocytes via CCR1. Inhibits endothelial cell proliferation. In cooperation with toll-like receptor 8/TLR8, induces chromatin remodeling and activates inflammatory gene expression via the TBK1-IRF5 axis. In addition, induces myofibroblast differentiation and collagen synthesis in different precursor cells, including endothelial cells, by stimulating endothelial-to-mesenchymal transition. Interacts with thrombomodulin/THBD to enhance the activation of protein C and thus potentiates its anticoagulant activity. The protein is Platelet factor 4 (PF4) of Bos taurus (Bovine).